The sequence spans 423 residues: MSYVIDRRLNGKNKSTVNRQRFLQRYRGHIKKAVEEAVGRRSITDMEHGEQISIPGRDIDEPVLHHGRGGRQTIVHPGNKEFVAGERIPRPQGGGGGQGAGQASNSGEGMDDFVFQITQEEFLDFMFEDLELPNLVKRHLTGTDTFKTVRAGIANEGNPSRINIVRTLRSAHARRIALSGSSRAQLRALKAELERLRLEEPHNFGDIKAAEEEIERLKARINRVPFLDTFDLKYNLLVKHPNPSSKAVMFCLMDVSGSMTQSTKDIAKRFFILLYLFLKRNYDKIDVVFIRHHTSAKEVDEEEFFYSRETGGTIVSSALKMMQEIMAERYPANEWNIYAAQASDGDNWNDDSPLCRDILINQIMPFVQYFTYVEITPREHQALWYEYNQVAEAFSDAFAQQQLVSAADIYPVFRELFQRRMTS.

The interval 84 to 109 (AGERIPRPQGGGGGQGAGQASNSGEG) is disordered.

This sequence belongs to the UPF0229 family.

The sequence is that of UPF0229 protein PST_0721 from Stutzerimonas stutzeri (strain A1501) (Pseudomonas stutzeri).